A 282-amino-acid polypeptide reads, in one-letter code: tRNA pseudouridine synthase B (282 aa).

The Nucleophile role is filled by Asp-39.

This sequence belongs to the pseudouridine synthase TruB family. Type 1 subfamily.

The catalysed reaction is uridine(55) in tRNA = pseudouridine(55) in tRNA. Its function is as follows. Responsible for synthesis of pseudouridine from uracil-55 in the psi GC loop of transfer RNAs. This Borrelia garinii subsp. bavariensis (strain ATCC BAA-2496 / DSM 23469 / PBi) (Borreliella bavariensis) protein is tRNA pseudouridine synthase B.